The following is a 243-amino-acid chain: Probable transcriptional regulatory protein BB_0025 (243 aa).

It belongs to the TACO1 family.

The protein localises to the cytoplasm. This Borreliella burgdorferi (strain ATCC 35210 / DSM 4680 / CIP 102532 / B31) (Borrelia burgdorferi) protein is Probable transcriptional regulatory protein BB_0025.